The following is a 201-amino-acid chain: Thylakoid membrane protein slr1796 (201 aa).

The chain crosses the membrane as a helical span at residues 16–36; it reads FLIVSLAFAMLLLGIWGTLPF.

Its subcellular location is the cellular thylakoid membrane. This chain is Thylakoid membrane protein slr1796, found in Synechocystis sp. (strain ATCC 27184 / PCC 6803 / Kazusa).